Reading from the N-terminus, the 457-residue chain is Na(+)/H(+) antiporter NhaA (457 aa).

11 consecutive transmembrane segments (helical) span residues Ala-33–Leu-53, Phe-76–Met-96, Leu-114–Phe-134, Ala-142–Leu-162, Val-172–Phe-192, Gly-196–Ser-216, Tyr-235–Ile-255, Phe-308–Asn-328, Thr-349–Val-369, Leu-385–Leu-405, and Val-419–Thr-439.

This sequence belongs to the NhaA Na(+)/H(+) (TC 2.A.33) antiporter family.

The protein resides in the cell inner membrane. It catalyses the reaction Na(+)(in) + 2 H(+)(out) = Na(+)(out) + 2 H(+)(in). Its function is as follows. Na(+)/H(+) antiporter that extrudes sodium in exchange for external protons. In Anaeromyxobacter sp. (strain Fw109-5), this protein is Na(+)/H(+) antiporter NhaA.